The chain runs to 97 residues: MLTDLYLKILMEEHKKRTSAKTLEMVKNGTHPAQKEITCDFCGHIGKGPGFYLKHNDRCKLNPNRIQLNCPYCDKKDLSPSTYKRWHGDNCKTRFND.

Its function is as follows. This endonuclease is specific to the nrdB gene splice junction and is involved in intron homing. This Escherichia coli (Bacteriophage T4) protein is Defective intron-associated endonuclease 3 (ITEVIIIR).